The primary structure comprises 230 residues: Homeobox protein Hox-B5 (230 aa).

Residues 1 to 135 are disordered; that stretch reads GGGGGNVSGS…GAAGTDGQSP (135 aa). The span at 49–65 shows a compositional bias: polar residues; sequence FPGQESSRFRANQNCPL. The span at 87 to 103 shows a compositional bias: low complexity; it reads ATSSAHFTETEETSASS. The Antp-type hexapeptide signature appears at 137–142; sequence IFPWMR. Positions 155 to 214 form a DNA-binding region, homeobox; that stretch reads GKRARTAYTRYQTLELEKEFHFNRYLTRRRRIEIAHTLCLSERQIKIWFQNRRMKWKKDN.

It belongs to the Antp homeobox family.

Its subcellular location is the nucleus. In terms of biological role, sequence-specific transcription factor which is part of a developmental regulatory system that provides cells with specific positional identities on the anterior-posterior axis. This chain is Homeobox protein Hox-B5 (hoxb5), found in Xenopus laevis (African clawed frog).